We begin with the raw amino-acid sequence, 451 residues long: uncharacterized protein (451 aa).

In terms of domain architecture, TRAM spans 2 to 60; it reads VVKVKQKIPLKIKRMGINGEGIGFYQKTLVFVPGALKGEDIFCQITAVKRNFAEAKLLT. [4Fe-4S] cluster-binding residues include C73, C79, C82, and C162. S-adenosyl-L-methionine contacts are provided by Q283, Y312, D333, and D381. C408 (nucleophile) is an active-site residue.

This sequence belongs to the class I-like SAM-binding methyltransferase superfamily. RNA M5U methyltransferase family.

This is an uncharacterized protein from Streptococcus pyogenes serotype M1.